Consider the following 132-residue polypeptide: Small ribosomal subunit protein uS8 (132 aa).

Belongs to the universal ribosomal protein uS8 family. Part of the 30S ribosomal subunit. Contacts proteins S5 and S12.

Functionally, one of the primary rRNA binding proteins, it binds directly to 16S rRNA central domain where it helps coordinate assembly of the platform of the 30S subunit. This chain is Small ribosomal subunit protein uS8, found in Ehrlichia chaffeensis (strain ATCC CRL-10679 / Arkansas).